The following is a 289-amino-acid chain: MDRPDLPLNALRVFEVAMRQGSFTKAAIELRVTQAAVSHQVARLEDLLGTALFLRTSQGLIPTDEGRLLFPVLEHGFDAMSRVLDRLGGRRDIEVLKVGVNTTFAMCWLMPRLEAFRQAHPQIDLRISTNNNRVEILREGLDMAIRFGTGGWTGHDAIPLAEAPMAPLCAPGLASRLLHPSDLGQVTLLRSYRSAEWPGWFEAAGVPCPPVTGPVFDSSVALAELATSGAGVALLPISMFESYIAQGRLAQPFGVTVSVGRYYLAWPSDRPATSAMSTFSRWLTGQSAE.

Residues 6-63 form the HTH lysR-type domain; sequence LPLNALRVFEVAMRQGSFTKAAIELRVTQAAVSHQVARLEDLLGTALFLRTSQGLIPT. A DNA-binding region (H-T-H motif) is located at residues 23–42; the sequence is FTKAAIELRVTQAAVSHQVA.

This sequence belongs to the LysR transcriptional regulatory family.

It is found in the cytoplasm. This protein is a positive regulator of gene expression of cephalosporinase (AmpC). This chain is HTH-type transcriptional activator AmpR (ampR), found in Rhodobacter capsulatus (Rhodopseudomonas capsulata).